Here is a 402-residue protein sequence, read N- to C-terminus: L-threonine ammonia-lyase (402 aa).

Position 51 is an N6-(pyridoxal phosphate)lysine (Lys51). Residues Asn78, Gly178 to Leu181, and Ser302 each bind pyridoxal 5'-phosphate. The region spanning Lys327 to Lys402 is the ACT domain.

The protein belongs to the serine/threonine dehydratase family. Pyridoxal 5'-phosphate is required as a cofactor.

The catalysed reaction is L-threonine = 2-oxobutanoate + NH4(+). It catalyses the reaction L-serine = pyruvate + NH4(+). The protein operates within amino-acid biosynthesis; L-isoleucine biosynthesis; 2-oxobutanoate from L-threonine: step 1/1. In terms of biological role, catalyzes the conversion of threonine to 2-oxobutanoate and ammonia. Functions in the threonine-dependent pathway of isoleucine biosynthesis, which is the minor pathway for isoleucine biosynthesis in G.sulfurreducens. Also displays serine ammonia-lyase activity, yielding pyruvate from L-serine. This chain is L-threonine ammonia-lyase, found in Geobacter sulfurreducens (strain ATCC 51573 / DSM 12127 / PCA).